The chain runs to 32 residues: Photosystem I reaction center subunit XII (32 aa).

The chain crosses the membrane as a helical span at residues 9-28 (VYIALVVALIPGLLAWRLAT).

Belongs to the PsaM family.

It localises to the cellular thylakoid membrane. In Nostoc sp. (strain PCC 7120 / SAG 25.82 / UTEX 2576), this protein is Photosystem I reaction center subunit XII.